A 415-amino-acid chain; its full sequence is Serine hydroxymethyltransferase (415 aa).

Residues Leu-120 and 124 to 126 (GHL) contribute to the (6S)-5,6,7,8-tetrahydrofolate site. The residue at position 229 (Lys-229) is an N6-(pyridoxal phosphate)lysine.

The protein belongs to the SHMT family. Homodimer. The cofactor is pyridoxal 5'-phosphate.

It is found in the cytoplasm. The catalysed reaction is (6R)-5,10-methylene-5,6,7,8-tetrahydrofolate + glycine + H2O = (6S)-5,6,7,8-tetrahydrofolate + L-serine. It participates in one-carbon metabolism; tetrahydrofolate interconversion. It functions in the pathway amino-acid biosynthesis; glycine biosynthesis; glycine from L-serine: step 1/1. Its function is as follows. Catalyzes the reversible interconversion of serine and glycine with tetrahydrofolate (THF) serving as the one-carbon carrier. This reaction serves as the major source of one-carbon groups required for the biosynthesis of purines, thymidylate, methionine, and other important biomolecules. Also exhibits THF-independent aldolase activity toward beta-hydroxyamino acids, producing glycine and aldehydes, via a retro-aldol mechanism. This is Serine hydroxymethyltransferase from Desulforudis audaxviator (strain MP104C).